A 242-amino-acid chain; its full sequence is 7-cyano-7-deazaguanine synthase (242 aa).

13–23 (FSGGQDSSVCL) lines the ATP pocket. Zn(2+)-binding residues include cysteine 201, cysteine 216, cysteine 219, and cysteine 222.

This sequence belongs to the QueC family. It depends on Zn(2+) as a cofactor.

The catalysed reaction is 7-carboxy-7-deazaguanine + NH4(+) + ATP = 7-cyano-7-deazaguanine + ADP + phosphate + H2O + H(+). Its pathway is purine metabolism; 7-cyano-7-deazaguanine biosynthesis. In terms of biological role, catalyzes the ATP-dependent conversion of 7-carboxy-7-deazaguanine (CDG) to 7-cyano-7-deazaguanine (preQ(0)). The protein is 7-cyano-7-deazaguanine synthase of Caulobacter vibrioides (strain ATCC 19089 / CIP 103742 / CB 15) (Caulobacter crescentus).